A 196-amino-acid chain; its full sequence is Neuropeptide prohormone-4 (196 aa).

The first 25 residues, 1–25 (MSSPLRMDVTFLLAAIAVTWVCGLK), serve as a signal peptide directing secretion. The 41-residue stretch at 50–90 (DCDIASPFKCEESPTCLRLFQVCNGRWDCEHGSDEDNALCA) folds into the LDL-receptor class A domain. 3 cysteine pairs are disulfide-bonded: Cys51–Cys65, Cys59–Cys78, and Cys72–Cys89.

Expressed by the venom duct.

It localises to the secreted. This is Neuropeptide prohormone-4 from Conus victoriae (Queen Victoria cone).